The primary structure comprises 275 residues: Ammonia transport outward protein 3 (275 aa).

The Extracellular portion of the chain corresponds to 1–84 (MTSSASSPQD…NCAKYTPHQF (84 aa)). S4 is subject to Phosphoserine. The chain crosses the membrane as a helical span at residues 85–105 (ANPVPLGLASFSLSCLVLSLI). At 106 to 120 (NANVRGVTDGKWALS) the chain is on the cytoplasmic side. Residues 121 to 141 (LFMFFGGAIELFAGLLCFVIG) form a helical membrane-spanning segment. Residues 142–181 (DTYAMTVFSSFGGFWICYGYGLTDTDNLVSGYTDPTMLNN) lie on the Extracellular side of the membrane. A helical transmembrane segment spans residues 182-202 (VIGFFLAGWTVFTFLMLMCTL). At 203-207 (KSTWG) the chain is on the cytoplasmic side. A helical transmembrane segment spans residues 208 to 228 (LFLLLTFLDLTFLLLCIGTFI). Over 229 to 236 (DNNNLKMA) the chain is Extracellular. The helical transmembrane segment at 237 to 257 (GGYFGILSSCCGWYSLYCSVV) threads the bilayer. At 258–275 (SPSNSYLAFRAHTMPNAP) the chain is on the cytoplasmic side.

Belongs to the acetate uptake transporter (AceTr) (TC 2.A.96) family.

It is found in the cell membrane. In terms of biological role, transporter protein required for ammonia export. Induced in rho(0) cells, probably to eliminate the excess ammonia that arises because of a potential defect in ammonia assimilation in those cells. The sequence is that of Ammonia transport outward protein 3 (ATO3) from Saccharomyces cerevisiae (strain ATCC 204508 / S288c) (Baker's yeast).